The following is a 578-amino-acid chain: MTNPITHYIGSFIDEFALSGVTDAVVCPGSRSTPLAVLAAAHPDIQVHIQIDERSAGFFALGLAKARQRPVMLICTSGTAAANFYPAVIEAHYSRVPLIVLTADRPHELREVGAPQAINQHFLFGNFVKFFTDSALPEENPQMLSYIRTLAGRAVSEAGKRPMGPVHINVPLREPLMPDLSAAPFERMRKGRHVSVTTGIQSADQDSLCHITERLAGTERGMIVCGEIHGEAEKQQIIALAEMLQFPILADPLSNLRNGKHDKTLIIDAYDSFLKDEAIKEALRPDAVIRFGPMPVSKPLFLWLRDDPAIEQFIVDEDGGWRDPTQAGAHMIHCHPSVFLEAVRSAETGKRPSGWLEKWQFVNERFRSHLQAASMDDLSFEGNVYRQLQHLVPEGSSIFVGNSMPIRDVDTFFEKQDRSFRVYANRGANGIDGVVSSAMGLCEGTKAPVTLVIGDLSFYHDLNGLLAAKKLGIPLTVILINNDGGGIFSFLPQASDKTHFEELFGTPTGLDFRHAAALYGGTYTCPETWEAFKDAYQPQADKPGLHIIELKTDRTSRVQFHRDLLQAAVREVKKEWKL.

Belongs to the TPP enzyme family. MenD subfamily. In terms of assembly, homodimer. The cofactor is Mg(2+). It depends on Mn(2+) as a cofactor. Thiamine diphosphate serves as cofactor.

The enzyme catalyses isochorismate + 2-oxoglutarate + H(+) = 5-enolpyruvoyl-6-hydroxy-2-succinyl-cyclohex-3-ene-1-carboxylate + CO2. It participates in quinol/quinone metabolism; 1,4-dihydroxy-2-naphthoate biosynthesis; 1,4-dihydroxy-2-naphthoate from chorismate: step 2/7. The protein operates within quinol/quinone metabolism; menaquinone biosynthesis. Its function is as follows. Catalyzes the thiamine diphosphate-dependent decarboxylation of 2-oxoglutarate and the subsequent addition of the resulting succinic semialdehyde-thiamine pyrophosphate anion to isochorismate to yield 2-succinyl-5-enolpyruvyl-6-hydroxy-3-cyclohexene-1-carboxylate (SEPHCHC). The chain is 2-succinyl-5-enolpyruvyl-6-hydroxy-3-cyclohexene-1-carboxylate synthase from Bacillus velezensis (strain DSM 23117 / BGSC 10A6 / LMG 26770 / FZB42) (Bacillus amyloliquefaciens subsp. plantarum).